A 78-amino-acid chain; its full sequence is Omega-conotoxin-like 12 (78 aa).

Residues 1–22 (MKLTCVVIVAVLLLTACQLITA) form the signal peptide. Residues 23-42 (DDSRGTQKHRSLRSTTKVSK) constitute a propeptide that is removed on maturation. 3 disulfides stabilise this stretch: Cys46/Cys62, Cys53/Cys65, and Cys61/Cys72.

The protein belongs to the conotoxin O1 superfamily. Expressed by the venom duct.

The protein localises to the secreted. Its function is as follows. Omega-conotoxins act at presynaptic membranes, they bind and block voltage-gated calcium channels (Cav). This is Omega-conotoxin-like 12 from Conus striatus (Striated cone).